Here is a 633-residue protein sequence, read N- to C-terminus: Glutamyl-tRNA(Gln) amidotransferase subunit E (633 aa).

The protein belongs to the GatB/GatE family. GatE subfamily. As to quaternary structure, heterodimer of GatD and GatE.

It catalyses the reaction L-glutamyl-tRNA(Gln) + L-glutamine + ATP + H2O = L-glutaminyl-tRNA(Gln) + L-glutamate + ADP + phosphate + H(+). Its function is as follows. Allows the formation of correctly charged Gln-tRNA(Gln) through the transamidation of misacylated Glu-tRNA(Gln) in organisms which lack glutaminyl-tRNA synthetase. The reaction takes place in the presence of glutamine and ATP through an activated gamma-phospho-Glu-tRNA(Gln). The GatDE system is specific for glutamate and does not act on aspartate. In Methanococcus vannielii (strain ATCC 35089 / DSM 1224 / JCM 13029 / OCM 148 / SB), this protein is Glutamyl-tRNA(Gln) amidotransferase subunit E.